A 126-amino-acid polypeptide reads, in one-letter code: Probable DNA-directed RNA polymerase II subunit RPB11 (126 aa).

It belongs to the archaeal Rpo11/eukaryotic RPB11/RPC19 RNA polymerase subunit family. In terms of assembly, component of the RNA polymerase II (Pol II) complex consisting of 12 subunits.

Its subcellular location is the nucleus. DNA-dependent RNA polymerase catalyzes the transcription of DNA into RNA using the four ribonucleoside triphosphates as substrates. Component of RNA polymerase II which synthesizes mRNA precursors and many functional non-coding RNAs. Pol II is the central component of the basal RNA polymerase II transcription machinery. It is composed of mobile elements that move relative to each other. RPB11 is part of the core element with the central large cleft. The protein is Probable DNA-directed RNA polymerase II subunit RPB11 of Plasmodium chabaudi chabaudi.